Here is a 255-residue protein sequence, read N- to C-terminus: ATP synthase subunit a (255 aa).

Helical transmembrane passes span Thr40–Val60, Leu109–Val129, Asn135–Leu155, Val163–Ile183, Leu196–Val218, and Ile230–Glu250.

It belongs to the ATPase A chain family. As to quaternary structure, F-type ATPases have 2 components, CF(1) - the catalytic core - and CF(0) - the membrane proton channel. CF(1) has five subunits: alpha(3), beta(3), gamma(1), delta(1), epsilon(1). CF(0) has three main subunits: a(1), b(2) and c(9-12). The alpha and beta chains form an alternating ring which encloses part of the gamma chain. CF(1) is attached to CF(0) by a central stalk formed by the gamma and epsilon chains, while a peripheral stalk is formed by the delta and b chains.

The protein resides in the cell inner membrane. Its function is as follows. Key component of the proton channel; it plays a direct role in the translocation of protons across the membrane. The sequence is that of ATP synthase subunit a from Sorangium cellulosum (strain So ce56) (Polyangium cellulosum (strain So ce56)).